The primary structure comprises 268 residues: Putative F-box protein At3g23420 (268 aa).

The F-box domain occupies 5 to 51 (PRDLSDLPRNMAEEVLSRVPMTSLRRLRFTCKKWNTLSRCRSFAKKH).

The polypeptide is Putative F-box protein At3g23420 (Arabidopsis thaliana (Mouse-ear cress)).